The chain runs to 103 residues: Acylphosphatase-2 (103 aa).

S2 bears the N-acetylserine mark. In terms of domain architecture, Acylphosphatase-like spans 13–103 (SVDYEVFGRV…LDFSGFSTRY (91 aa)). Catalysis depends on residues R28 and N46.

Belongs to the acylphosphatase family.

It carries out the reaction an acyl phosphate + H2O = a carboxylate + phosphate + H(+). In terms of biological role, its physiological role is not yet clear. This is Acylphosphatase-2 (ACYP2) from Anas platyrhynchos (Mallard).